Here is a 237-residue protein sequence, read N- to C-terminus: LexA repressor (237 aa).

Over residues 1 to 12 the composition is skewed to polar residues; that stretch reads MPVKDSSSNKKN. A disordered region spans residues 1–20; the sequence is MPVKDSSSNKKNQIGKLSER. Positions 41 to 61 form a DNA-binding region, H-T-H motif; it reads IREIGDAAGLQSTSSVAYQLK. The segment covering 67 to 80 has biased composition (basic and acidic residues); that stretch reads GYLRRDPNKPRAVD. Positions 67-112 are disordered; that stretch reads GYLRRDPNKPRAVDVRALPDPIPSKPGRKPGPKKSSVAISPDPAET. Residues S161 and K198 each act as for autocatalytic cleavage activity in the active site.

The protein belongs to the peptidase S24 family. Homodimer.

It catalyses the reaction Hydrolysis of Ala-|-Gly bond in repressor LexA.. Represses a number of genes involved in the response to DNA damage (SOS response), including recA and lexA. In the presence of single-stranded DNA, RecA interacts with LexA causing an autocatalytic cleavage which disrupts the DNA-binding part of LexA, leading to derepression of the SOS regulon and eventually DNA repair. The sequence is that of LexA repressor from Corynebacterium diphtheriae (strain ATCC 700971 / NCTC 13129 / Biotype gravis).